Reading from the N-terminus, the 269-residue chain is Aegyptin-like protein (269 aa).

A signal peptide spans 1–19; that stretch reads MKLLLLLASVLCLALIVSA. Residues 19–152 are disordered; the sequence is ARPSDETTDQ…GGAEGGEESP (134 aa). Residues 38–148 form a GE-rich region which mediates binding of Ca(2+) region; sequence TSDSYHQEED…AGEEGGAEGG (111 aa). 3 stretches are compositionally biased toward acidic residues: residues 56–73, 98–121, and 131–149; these read GTED…ESSS, GEED…EGGA, and GGAD…EGGE. A mediates binding of host collagen and inhibition of platelet aggregation region spans residues 148–269; the sequence is GEESPVNTYH…DCIVEKRDSE (122 aa). 2 disulfides stabilise this stretch: Cys-208/Cys-261 and Cys-230/Cys-239.

It belongs to the aegyptin family. As to expression, female saliva (at protein level). Distal lateral lobes of female salivary gland (at protein level). Low-level expression in male salivary gland. Not detected in female and male carcasses.

It localises to the secreted. Its function is as follows. Modulates blood feeding of female mosquitoes on vertebrate hosts. Inhibits collagen-induced platelet aggregation in the host via preventing collagen interaction with its ligands: glycoprotein VI and integrin alpha-2/beta-1 (ITGA2/ITGB1). Inhibits collagen-induced increase of Ca(2+) levels in host platelets. Binds to host collagens. Binds Ca(2+). Prevents a decrease in platelet count in the host blood after collagen injection. Functionally, (Microbial infection) Does not affect the development of Plasmodium berghei parasites in mosquitoes. This Anopheles stephensi (Indo-Pakistan malaria mosquito) protein is Aegyptin-like protein.